The following is a 592-amino-acid chain: Multidrug transporter AQR1 (592 aa).

Residues 1–77 form a disordered region; sequence MVESGPHSIN…EISSTHSQDA (77 aa). A helical membrane pass occupies residues 99–119; it reads WCMVALLTACGFWSSLGSPIY. N138 is a glycosylation site (N-linked (GlcNAc...) asparagine). The next 5 helical transmembrane spans lie at 139 to 159, 166 to 186, 188 to 208, 231 to 251, and 255 to 275; these read ITVVVYLLFQGLAPTCSGGLA, PVLLIGMLIYVVASIGLACAP, YGVIVFLRCVQSIGISPSIAI, GFVLLGQAFGSLIGAALAAAW, and AIFWFLTIGCGASFAICFALL. N-linked (GlcNAc...) asparagine glycosylation is present at N285. The next 6 helical transmembrane spans lie at 340 to 360, 374 to 394, 432 to 452, 459 to 479, 497 to 517, and 523 to 543; these read IFLSLLPPGLAFAMWTLMLSA, LTIIGVCYLPAGIGGLIGSFA, LQSVLPQNFLCVVTYILFGWS, IPSILITSCVSSFCAMSTLSA, SCFNFMRCSLSAILMGCFAKM, and VGGTFTLLAGLVFVGNFLMFI.

Belongs to the major facilitator superfamily. CAR1 family.

It localises to the cell membrane. Multidrug transporter acts as a determinant of resistance to acetic acid, flucytosine and clotrimazole, these 3 compounds acting synergistically against the pathogen. Reduces the intracellular accumulation of the antifungal agents flucytosine and, to a moderate extent, of clotrimazole. Its role in acetic acid resistance may be indirect, presumably through the transport of a still unidentified physiological substrate. This is Multidrug transporter AQR1 from Candida glabrata (strain ATCC 2001 / BCRC 20586 / JCM 3761 / NBRC 0622 / NRRL Y-65 / CBS 138) (Yeast).